Reading from the N-terminus, the 216-residue chain is uncharacterized protein (216 aa).

Residues 5-25 (YVKALVAVTVALGVLLPSTIS) traverse the membrane as a helical segment. Composition is skewed to low complexity over residues 28–67 (KSFS…SSSS) and 89–108 (KASS…ATSK). The tract at residues 28–115 (KSFSGRSSSS…TSKVTGKTYS (88 aa)) is disordered. 2 consecutive transmembrane segments (helical) span residues 137-157 (GFAP…MFMI) and 183-203 (IAWI…IALI).

It localises to the cell membrane. This is an uncharacterized protein from Bacillus subtilis (strain 168).